We begin with the raw amino-acid sequence, 184 residues long: ATP synthase subunit b, chloroplastic (184 aa).

Residues 27–49 (LATNPINLSVVLGVLIFFGKGVL) form a helical membrane-spanning segment.

This sequence belongs to the ATPase B chain family. F-type ATPases have 2 components, F(1) - the catalytic core - and F(0) - the membrane proton channel. F(1) has five subunits: alpha(3), beta(3), gamma(1), delta(1), epsilon(1). F(0) has four main subunits: a(1), b(1), b'(1) and c(10-14). The alpha and beta chains form an alternating ring which encloses part of the gamma chain. F(1) is attached to F(0) by a central stalk formed by the gamma and epsilon chains, while a peripheral stalk is formed by the delta, b and b' chains.

It localises to the plastid. The protein resides in the chloroplast thylakoid membrane. In terms of biological role, f(1)F(0) ATP synthase produces ATP from ADP in the presence of a proton or sodium gradient. F-type ATPases consist of two structural domains, F(1) containing the extramembraneous catalytic core and F(0) containing the membrane proton channel, linked together by a central stalk and a peripheral stalk. During catalysis, ATP synthesis in the catalytic domain of F(1) is coupled via a rotary mechanism of the central stalk subunits to proton translocation. Functionally, component of the F(0) channel, it forms part of the peripheral stalk, linking F(1) to F(0). The polypeptide is ATP synthase subunit b, chloroplastic (Lepidium virginicum (Virginia pepperweed)).